The chain runs to 541 residues: Chaperonin GroEL 1 (541 aa).

ATP is bound by residues 29-32, 86-90, Gly413, 477-479, and Asp493; these read TLGP, DGTTT, and NAA.

The protein belongs to the chaperonin (HSP60) family. As to quaternary structure, forms a cylinder of 14 subunits composed of two heptameric rings stacked back-to-back. Interacts with the co-chaperonin GroES.

The protein localises to the cytoplasm. It catalyses the reaction ATP + H2O + a folded polypeptide = ADP + phosphate + an unfolded polypeptide.. Together with its co-chaperonin GroES, plays an essential role in assisting protein folding. The GroEL-GroES system forms a nano-cage that allows encapsulation of the non-native substrate proteins and provides a physical environment optimized to promote and accelerate protein folding. The sequence is that of Chaperonin GroEL 1 from Nocardioides sp. (strain ATCC BAA-499 / JS614).